Consider the following 539-residue polypeptide: MPPAGGPRAPRPAALPRSLSRLRECPGRSRIVLALGATQMALGCLIVAVSFAALALTTSARVRHSCPFWAGFSVLLSGLIGVVSWKRPLSLVITFFMLLSAVCVMLNLAGSILSCQNAQLVNSLEGCQLIKFDSVEVCVCCELQHQSSGCSNLGETLKLNPLQENCNAVRLTLKDLLFSVCALNVLSTIVCALATAMCCMQMVSSDVLQMFLPQRSHPANPTCVTPHGTVLHQTLDFDEFIPPLPPPPYYPPEYTCTPSTEAQRGLHLDFAPSPFGTLYDVAINSPGLLYPAELPPPYEAVVGQPPASQVTSIGQQVAESSSGDPNTSAGFSTPVPADSTSLLVSEGTATPGSSPSPDGPVGAPAPSEPALPPGHVSPEDPGMGSQVQPGPGRVSRSTSDPTLCTSSMAGDASSHRPSCSQDLEAGLSEAVPGSASMSRSATAACRAQLSPAGDPDTWKTDQRPTPEPFPATSKERPRSLVDSKAYADARVLVAKFLEHSHCALPTEAQHMVGAMRLAVTNEERLEEEAVFGADVLDQV.

Helical transmembrane passes span 31 to 51, 65 to 85, 89 to 109, and 176 to 196; these read IVLALGATQMALGCLIVAVSF, SCPFWAGFSVLLSGLIGVVSW, LSLVITFFMLLSAVCVMLNLA, and LLFSVCALNVLSTIVCALATA. The disordered stretch occupies residues 301–481; sequence VVGQPPASQV…TSKERPRSLV (181 aa). Residues 306 to 331 are compositionally biased toward polar residues; sequence PASQVTSIGQQVAESSSGDPNTSAGF. Residues 347–365 are compositionally biased toward low complexity; it reads GTATPGSSPSPDGPVGAPA. The segment covering 395–408 has biased composition (polar residues); it reads SRSTSDPTLCTSSM.

The protein belongs to the ENTREP family.

It localises to the membrane. This chain is Protein ENTREP2, found in Homo sapiens (Human).